We begin with the raw amino-acid sequence, 440 residues long: Thymidine phosphorylase (440 aa).

Belongs to the thymidine/pyrimidine-nucleoside phosphorylase family. Homodimer.

The catalysed reaction is thymidine + phosphate = 2-deoxy-alpha-D-ribose 1-phosphate + thymine. It participates in pyrimidine metabolism; dTMP biosynthesis via salvage pathway; dTMP from thymine: step 1/2. In terms of biological role, the enzymes which catalyze the reversible phosphorolysis of pyrimidine nucleosides are involved in the degradation of these compounds and in their utilization as carbon and energy sources, or in the rescue of pyrimidine bases for nucleotide synthesis. The chain is Thymidine phosphorylase from Serratia proteamaculans (strain 568).